Here is a 338-residue protein sequence, read N- to C-terminus: Ribosomal RNA small subunit methyltransferase C (338 aa).

Belongs to the methyltransferase superfamily. RsmC family. As to quaternary structure, monomer.

It is found in the cytoplasm. It carries out the reaction guanosine(1207) in 16S rRNA + S-adenosyl-L-methionine = N(2)-methylguanosine(1207) in 16S rRNA + S-adenosyl-L-homocysteine + H(+). Specifically methylates the guanine in position 1207 of 16S rRNA in the 30S particle. This Photorhabdus laumondii subsp. laumondii (strain DSM 15139 / CIP 105565 / TT01) (Photorhabdus luminescens subsp. laumondii) protein is Ribosomal RNA small subunit methyltransferase C.